A 489-amino-acid chain; its full sequence is Ketol-acid reductoisomerase (NADP(+)) (489 aa).

The region spanning 16–207 (IKKCRFMEKK…GGHRAGVLES (192 aa)) is the KARI N-terminal Rossmann domain. Residues 44–47 (CGSQ), R67, S77, and 107–109 (DKQ) contribute to the NADP(+) site. H131 is a catalytic residue. G157 lines the NADP(+) pocket. KARI C-terminal knotted domains are found at residues 208–343 (SFVA…QSPD) and 344–483 (YDKK…MKNM). Residues D216, E220, E388, and E392 each coordinate Mg(2+). S413 is a substrate binding site.

The protein belongs to the ketol-acid reductoisomerase family. It depends on Mg(2+) as a cofactor.

The catalysed reaction is (2R)-2,3-dihydroxy-3-methylbutanoate + NADP(+) = (2S)-2-acetolactate + NADPH + H(+). It catalyses the reaction (2R,3R)-2,3-dihydroxy-3-methylpentanoate + NADP(+) = (S)-2-ethyl-2-hydroxy-3-oxobutanoate + NADPH + H(+). It participates in amino-acid biosynthesis; L-isoleucine biosynthesis; L-isoleucine from 2-oxobutanoate: step 2/4. It functions in the pathway amino-acid biosynthesis; L-valine biosynthesis; L-valine from pyruvate: step 2/4. Functionally, involved in the biosynthesis of branched-chain amino acids (BCAA). Catalyzes an alkyl-migration followed by a ketol-acid reduction of (S)-2-acetolactate (S2AL) to yield (R)-2,3-dihydroxy-isovalerate. In the isomerase reaction, S2AL is rearranged via a Mg-dependent methyl migration to produce 3-hydroxy-3-methyl-2-ketobutyrate (HMKB). In the reductase reaction, this 2-ketoacid undergoes a metal-dependent reduction by NADPH to yield (R)-2,3-dihydroxy-isovalerate. The chain is Ketol-acid reductoisomerase (NADP(+)) from Buchnera aphidicola subsp. Diuraphis noxia.